A 173-amino-acid chain; its full sequence is Superoxide dismutase [Cu-Zn] (173 aa).

Residues 1 to 22 (MNKAKTLLFTALAFGLSHQALA) form the signal peptide. 3 residues coordinate Cu cation: His-67, His-69, and His-92. A disulfide bridge links Cys-74 with Cys-169. His-92, His-101, His-110, and Asp-113 together coordinate Zn(2+). His-147 provides a ligand contact to Cu cation.

This sequence belongs to the Cu-Zn superoxide dismutase family. Homodimer. Requires Cu cation as cofactor. It depends on Zn(2+) as a cofactor.

The protein localises to the periplasm. The catalysed reaction is 2 superoxide + 2 H(+) = H2O2 + O2. Functionally, destroys radicals which are normally produced within the cells and which are toxic to biological systems. The polypeptide is Superoxide dismutase [Cu-Zn] (sodC) (Photobacterium leiognathi).